The sequence spans 51 residues: Insulin (51 aa).

Intrachain disulfides connect Cys-7–Cys-37, Cys-19–Cys-50, and Cys-36–Cys-41.

This sequence belongs to the insulin family. As to quaternary structure, heterodimer of a B chain and an A chain linked by two disulfide bonds.

The protein localises to the secreted. Functionally, insulin decreases blood glucose concentration. It increases cell permeability to monosaccharides, amino acids and fatty acids. It accelerates glycolysis, the pentose phosphate cycle, and glycogen synthesis in liver. This is Insulin (INS) from Balaenoptera borealis (Sei whale).